A 1440-amino-acid polypeptide reads, in one-letter code: MAGIIKKQILKHLSRFTKNLSPDKINLSTLKGEGQLTNLELDEEVLQNVLELPTWLAITRVYCNRASIRIQWTKLKTHPICLCLDKVEVEMKTCEDPRPPNGQSPIALASGQSEYGFAEKVVEGMFIIVNSITIKIHSKAFHASFELWQLQGYSVNPNWQQSDLRLTRITDPCRGEVLTFKEITWQTLRIEADATDNGDQDPVTTPLRLITNQGRIQIALKRRTKDCNVISSKLMFLLDDLLWVLTDSQLKAMMKYAESLSEAMEKSAHQRKSLAPEPVQITPPAPSAQQSWAQAFGGSQGNSNSSSSRLSQYFEKFDVKESSYHLLISRLDLHICDDSQSREPGVSANRLMGGAMQLTFRKMAFDYYPFHWAGDSCKHWVRHCEAMETRGQWAQKLVMEFQSKMEKWHEETGLKPPWHLGVDSLFRRKADSLSSPRKNPLERSPSQGRQPAFQPPAWNRLRSSCMVVRVDDLDIHQVSTAGQPSKKPSTLLSCSRKLHNLPTQVSAIHIEFTEYYFPDNQELPVPCPNLYIQLNGLTFTMDPVSLLWGNLFCLDLYRSLEQFKAIYKLEDSSQKDEHLDIRLDAFWLKVSFPLEKRERAELHRPQALVFSASGMIATNTRHAPHCSCSDLQSLFRGFAAAEFFHSNYDHFPKVPGGFSLLHMLFLHHAFQMDSCLPQPNTLPPQRPKASWDLWSVHFTQISLDFEGTENFKGHTLNFVAPFPLSIWACLPLRWQQAQARKLLLASEGRLKPSASFGSPVQSEALAPDSMSHPRSKTEHDLKSLSGLTEVMEILKEGSSGMDNKGPLTELEDVADVHMLVHSPAHVRVRLDHYQYLALLRLKEVLQRLQEQLTKDTESMTGSPLQNQTACIGVLFPSAEVALLMHPAPGAVDADSAGSDSTSLVDSELSPSEDRELKSDASSDQGPASPEKVLEESSIENQDVSQERPHSNGELQDSGPLAQQLAGKGHEAVESLQAKKLSRTQASSSPAALKPPAGRETAVNGQGELIPLKNIEGELSSAIHMTKDATKEALHATMDLTKEAVSLTKDAFSLGRDRMTSTMHKMLSLPPAKEPMAKTDEGVAAPVSGGAARLRFFSMKRTVSQQSFDGVSLDSSGPEDRISVDSDGSDSFVMLLESESGPESVPPGSLSNVSDNAGVQGSPLVNNYGQGSPAANSSVSPSGEDLIFHPVSVLVLKVNEVSFGIEVRGEDLTVALQAEELTLQQLGTVGLWQFLHGQCPGTCFQESSTLKTGHIRPAVGLRFEVGPGAAVHSPLASQNGFLHLLLHGCDLELLTSVLSGLGPFLEDEEIPVVVPMQIELLNSSITLKDDIPPIYPTSPGPIPITLAMEHVVLKRSDDGVFHIGAAAQDKPSAEVLKSEKRQPPKEQVFLVPTGEVFEQQVKELPILQKELIETKQALANANQDKEKLLQEIRKYNPFFEL.

Residues 3–95 enclose the Chorein N-terminal domain; sequence GIIKKQILKH…KVEVEMKTCE (93 aa). 3 disordered regions span residues 267–307, 430–456, and 751–780; these read SAHQ…NSSS, ADSL…FQPP, and KPSA…TEHD. Residues 287–307 show a composition bias toward low complexity; it reads SAQQSWAQAFGGSQGNSNSSS. S444, S446, S755, and S758 each carry phosphoserine. Residues 837–860 are a coiled coil; sequence ALLRLKEVLQRLQEQLTKDTESMT. The segment at 891 to 1008 is disordered; sequence VDADSAGSDS…ETAVNGQGEL (118 aa). A compositionally biased stretch (basic and acidic residues) spans 911–920; sequence SEDRELKSDA. A compositionally biased stretch (low complexity) spans 985–995; the sequence is ASSSPAALKPP. A phosphoserine mark is found at S988, S1103, and S1106. The disordered stretch occupies residues 1106–1180; the sequence is SFDGVSLDSS…SPAANSSVSP (75 aa). A compositionally biased stretch (low complexity) spans 1134 to 1150; it reads LLESESGPESVPPGSLS. Positions 1151-1180 are enriched in polar residues; that stretch reads NVSDNAGVQGSPLVNNYGQGSPAANSSVSP. A coiled-coil region spans residues 1401 to 1435; it reads KELPILQKELIETKQALANANQDKEKLLQEIRKYN.

In terms of assembly, homodimer (Potential). Interacts with UHRF1.

Its subcellular location is the late endosome. Tube-forming lipid transport protein which probably mediates the transfer of lipids between membranes at organelle contact sites. May be involved in the retrograde traffic of vesicle clusters in the endocytic pathway to the Golgi complex. This chain is Bridge-like lipid transfer protein family member 3A, found in Homo sapiens (Human).